A 406-amino-acid polypeptide reads, in one-letter code: Prenyltransferase phqJ (406 aa).

Polar residues predominate over residues 1–19 (MTVSTESNFPHGASTQKPQ). The disordered stretch occupies residues 1–23 (MTVSTESNFPHGASTQKPQSAEP). Glutamate 99 serves as a coordination point for brevianamide F. 3 residues coordinate dimethylallyl diphosphate: arginine 113, lysine 200, and tyrosine 202. A brevianamide F-binding site is contributed by tyrosine 204. Lysine 269, tyrosine 271, and tyrosine 340 together coordinate dimethylallyl diphosphate.

Belongs to the tryptophan dimethylallyltransferase family.

It functions in the pathway alkaloid biosynthesis. Functionally, prenyltransferase; part of the gene cluster that mediates the biosynthesis of paraherquamide, a fungal indole alkaloid that belongs to a family of natural products containing a characteristic bicyclo[2.2.2]diazaoctane core. The first steps in the biosynthesis of paraherquamide is the production of the beta-methyl-proline precursor from L-isoleucine. They require oxidation of a terminally hydroxylated L-isoleucine to the corresponding aldehyde by enzymes which have still to be identified. Spontaneous cyclization and dehydration would yield the 4-methyl pyrolline-5-carboxylic acid, which is then reduced by the pyrroline-5-carboxylate reductase phqD leading to the beta-methyl-proline precursor. The next step of paraherquamide biosynthesis involves coupling of beta-methyl-proline and L-tryptophan by the bimodular NRPS phqB, to produce a monooxopiperazine intermediate. The reductase (R) domain of phqB utilizes NADPH for hydride transfer to reduce the thioester bond of the T domain-tethered linear dipeptide to a hemithioaminal intermediate, which spontaneously cleaves the C-S bond to release the aldehyde product. This compound undergoes spontaneous cyclization and dehydration to give a dienamine which is reverse prenylated at C-2 by the reverse prenyltransferase phqJ. The other prenyltransferase present in the cluster, phqI may be a redundant gene in the pathway. During biosynthetic assembly, the key step to produce the polycyclic core is catalyzed by the bifunctional reductase and intramolecular [4+2] Diels-Alderase, phqE, resulting in formation of the [2.2.2] diazaoctane intermediate preparaherquamide. Following formation of preparaherquamide, an indole 2,3-epoxidation-initiated pinacol-like rearrangement is catalyzed by the phqK FAD-dependent monooxygenase. The prenyltransferase phqA, the cytochrome P450 monooxygenase phqL, and the FAD-linked oxidoreductase phqH (or the cytochrome P450 monooxygenase phqM), are proposed to be involved in the formation of the pyran ring. The FAD-dependent monooxygenase phqK is likely responsible for generation of the spiro-oxindole, and the N-methylation is likely mediated by the phqN methyltransferase leading to the isolable natural product paraherquamide F. However, the order of these biosynthetic steps has still to be determined. In late-stage paraherquamide biosynthesis, the third P450 monooxygenase, phqO, is probably responsible for the C-14 hydroxylation, transforming paraherquamide F to paraherquamide G, and paraherquamide E to the final product paraherquamide A. The expansion from the 6-membered ring pyran (in paraherquamides F and G) to the 7-membered dioxepin ring (in paraherquamides A and E) represents a poorly understood but intriguing process that probably involves the 2-oxoglutarate-dependent dioxygenase phqC. Finally, the remaining members of the paraherquamide cluster, including phqI as well as phqM (or phqH), do not have a clearly prescribed role and appear to be redundant. The protein is Prenyltransferase phqJ of Penicillium fellutanum.